Consider the following 252-residue polypeptide: Ubiquinone/menaquinone biosynthesis C-methyltransferase UbiE (252 aa).

Residues Thr-71, Asp-100, 124 to 125, and Ser-141 contribute to the S-adenosyl-L-methionine site; that span reads DA.

The protein belongs to the class I-like SAM-binding methyltransferase superfamily. MenG/UbiE family.

It carries out the reaction a 2-demethylmenaquinol + S-adenosyl-L-methionine = a menaquinol + S-adenosyl-L-homocysteine + H(+). The enzyme catalyses a 2-methoxy-6-(all-trans-polyprenyl)benzene-1,4-diol + S-adenosyl-L-methionine = a 5-methoxy-2-methyl-3-(all-trans-polyprenyl)benzene-1,4-diol + S-adenosyl-L-homocysteine + H(+). It participates in quinol/quinone metabolism; menaquinone biosynthesis; menaquinol from 1,4-dihydroxy-2-naphthoate: step 2/2. Its pathway is cofactor biosynthesis; ubiquinone biosynthesis. Functionally, methyltransferase required for the conversion of demethylmenaquinol (DMKH2) to menaquinol (MKH2) and the conversion of 2-polyprenyl-6-methoxy-1,4-benzoquinol (DDMQH2) to 2-polyprenyl-3-methyl-6-methoxy-1,4-benzoquinol (DMQH2). This Caulobacter sp. (strain K31) protein is Ubiquinone/menaquinone biosynthesis C-methyltransferase UbiE.